A 259-amino-acid polypeptide reads, in one-letter code: Ubiquinone/menaquinone biosynthesis C-methyltransferase UbiE (259 aa).

S-adenosyl-L-methionine-binding positions include Thr-82, Asp-103, 131-132, and Ser-148; that span reads NA.

It belongs to the class I-like SAM-binding methyltransferase superfamily. MenG/UbiE family.

The catalysed reaction is a 2-demethylmenaquinol + S-adenosyl-L-methionine = a menaquinol + S-adenosyl-L-homocysteine + H(+). It catalyses the reaction a 2-methoxy-6-(all-trans-polyprenyl)benzene-1,4-diol + S-adenosyl-L-methionine = a 5-methoxy-2-methyl-3-(all-trans-polyprenyl)benzene-1,4-diol + S-adenosyl-L-homocysteine + H(+). The protein operates within quinol/quinone metabolism; menaquinone biosynthesis; menaquinol from 1,4-dihydroxy-2-naphthoate: step 2/2. It participates in cofactor biosynthesis; ubiquinone biosynthesis. Its function is as follows. Methyltransferase required for the conversion of demethylmenaquinol (DMKH2) to menaquinol (MKH2) and the conversion of 2-polyprenyl-6-methoxy-1,4-benzoquinol (DDMQH2) to 2-polyprenyl-3-methyl-6-methoxy-1,4-benzoquinol (DMQH2). The chain is Ubiquinone/menaquinone biosynthesis C-methyltransferase UbiE from Vibrio campbellii (strain ATCC BAA-1116).